The following is a 262-amino-acid chain: Homeobox-leucine zipper protein HOX24 (262 aa).

Disordered stretches follow at residues 44–68 (AAGR…RKRR) and 162–189 (LNER…NSVM). Positions 46 to 62 (GRGGGDGDGGGGGGGGG) are enriched in gly residues. The homeobox DNA-binding region spans 61–122 (GGGERKRRFT…NKRARWRSKQ (62 aa)). The tract at residues 121-165 (KQIEHDYAALRAQYDALHARVESLRQEKLALAAQVDELRGKLNER) is leucine-zipper.

This sequence belongs to the HD-ZIP homeobox family. Class I subfamily. Expressed in roots and panicles.

The protein localises to the nucleus. Functionally, probable transcription factor. This chain is Homeobox-leucine zipper protein HOX24 (HOX24), found in Oryza sativa subsp. indica (Rice).